Reading from the N-terminus, the 171-residue chain is Adenine phosphoribosyltransferase (171 aa).

It belongs to the purine/pyrimidine phosphoribosyltransferase family. In terms of assembly, homodimer.

It localises to the cytoplasm. The enzyme catalyses AMP + diphosphate = 5-phospho-alpha-D-ribose 1-diphosphate + adenine. The protein operates within purine metabolism; AMP biosynthesis via salvage pathway; AMP from adenine: step 1/1. Catalyzes a salvage reaction resulting in the formation of AMP, that is energically less costly than de novo synthesis. This is Adenine phosphoribosyltransferase from Syntrophotalea carbinolica (strain DSM 2380 / NBRC 103641 / GraBd1) (Pelobacter carbinolicus).